Reading from the N-terminus, the 354-residue chain is 3-dehydroquinate synthase (354 aa).

NAD(+) is bound by residues 69–74 (DGEAEK), 103–107 (GVIGD), 127–128 (TS), Lys140, and Lys149. Glu182, His245, and His262 together coordinate Zn(2+).

This sequence belongs to the sugar phosphate cyclases superfamily. Dehydroquinate synthase family. The cofactor is Co(2+). Zn(2+) serves as cofactor. Requires NAD(+) as cofactor.

Its subcellular location is the cytoplasm. It carries out the reaction 7-phospho-2-dehydro-3-deoxy-D-arabino-heptonate = 3-dehydroquinate + phosphate. It functions in the pathway metabolic intermediate biosynthesis; chorismate biosynthesis; chorismate from D-erythrose 4-phosphate and phosphoenolpyruvate: step 2/7. Functionally, catalyzes the conversion of 3-deoxy-D-arabino-heptulosonate 7-phosphate (DAHP) to dehydroquinate (DHQ). The protein is 3-dehydroquinate synthase of Colwellia psychrerythraea (strain 34H / ATCC BAA-681) (Vibrio psychroerythus).